Here is a 174-residue protein sequence, read N- to C-terminus: Ribosome maturation factor RimM (174 aa).

One can recognise a PRC barrel domain in the interval 98–171 (EGEFYFHEII…KIEIELMEGL (74 aa)).

The protein belongs to the RimM family. In terms of assembly, binds ribosomal protein uS19.

The protein localises to the cytoplasm. Its function is as follows. An accessory protein needed during the final step in the assembly of 30S ribosomal subunit, possibly for assembly of the head region. Essential for efficient processing of 16S rRNA. May be needed both before and after RbfA during the maturation of 16S rRNA. It has affinity for free ribosomal 30S subunits but not for 70S ribosomes. The polypeptide is Ribosome maturation factor RimM (Bacillus subtilis (strain 168)).